The following is a 249-amino-acid chain: Globin-like protein 9 (249 aa).

The interval 20–43 (TNKGPNGLARRGTQRGCSRSKSTR) is disordered. A Globin domain is found at 52 to 205 (SLTFSQKQAL…LIDELRGGFE (154 aa)). Heme-binding residues include histidine 116 and histidine 148.

The protein belongs to the globin family.

This chain is Globin-like protein 9 (glb-9), found in Caenorhabditis elegans.